Consider the following 419-residue polypeptide: AT-hook motif nuclear-localized protein 4 (419 aa).

3 disordered regions span residues 1–168 (MEER…SGGG), 301–337 (QQQQQQIKKQRRERLGIPTTTQASNISFGGSAEDPKA), and 382–419 (DLFSSLPGEDREEDEDDLEGEDDEEFGGHSESDTEVPS). The Bipartite nuclear localization signal motif lies at 78–86 (KKKRGRPRK). Residues 78–90 (KKKRGRPRKYNPD) constitute a DNA-binding region (a.T hook). Over residues 101–112 (PISSSVPLTSEF) the composition is skewed to polar residues. Basic residues predominate over residues 115 to 130 (RKRGRGRGRGRGRGRG). The segment covering 136–148 (GSREPNNNNNDNN) has biased composition (low complexity). Residues 174 to 314 (VSPSFTPHVL…QQIKKQRRER (141 aa)) enclose the PPC domain. Polar residues predominate over residues 318 to 328 (PTTTQASNISF). Residues 391–406 (DREEDEDDLEGEDDEE) are compositionally biased toward acidic residues.

In terms of assembly, homodimer. Interacts with AHL3. As to expression, predominantly expressed in the stele of the root meristem with a specificity to the procambium.

It localises to the nucleus. Functionally, transcription factor that specifically binds AT-rich DNA sequences related to the nuclear matrix attachment regions (MARs). Acts redundantly with AHL3 to regulate the formation of tissue boundary between the xylem and procambium in the root meristem. Cell-to-cell movement of AHL4 from the procambium to the xylem is critical for its function in root vascular patterning. This Arabidopsis thaliana (Mouse-ear cress) protein is AT-hook motif nuclear-localized protein 4.